Consider the following 99-residue polypeptide: NADH-quinone oxidoreductase subunit K (99 aa).

Transmembrane regions (helical) follow at residues 3–23 (PDNY…GVML), 28–48 (IVVF…FVTF), and 59–79 (VIAF…LGII).

The protein belongs to the complex I subunit 4L family. As to quaternary structure, NDH-1 is composed of 14 different subunits. Subunits NuoA, H, J, K, L, M, N constitute the membrane sector of the complex.

The protein resides in the cell membrane. The catalysed reaction is a quinone + NADH + 5 H(+)(in) = a quinol + NAD(+) + 4 H(+)(out). NDH-1 shuttles electrons from NADH, via FMN and iron-sulfur (Fe-S) centers, to quinones in the respiratory chain. The immediate electron acceptor for the enzyme in this species is believed to be a menaquinone. Couples the redox reaction to proton translocation (for every two electrons transferred, four hydrogen ions are translocated across the cytoplasmic membrane), and thus conserves the redox energy in a proton gradient. The chain is NADH-quinone oxidoreductase subunit K from Mycobacteroides abscessus (strain ATCC 19977 / DSM 44196 / CCUG 20993 / CIP 104536 / JCM 13569 / NCTC 13031 / TMC 1543 / L948) (Mycobacterium abscessus).